A 461-amino-acid polypeptide reads, in one-letter code: Ribosomal protein uS12 methylthiotransferase RimO (461 aa).

In terms of domain architecture, MTTase N-terminal spans 13–128 (PKVGFVSLGC…VMQHVHTHLP (116 aa)). 6 residues coordinate [4Fe-4S] cluster: Cys-22, Cys-58, Cys-87, Cys-159, Cys-163, and Cys-166. The Radical SAM core domain maps to 145–390 (LTPRHYAYLK…MEVAEEVSAK (246 aa)). The TRAM domain maps to 393–461 (AKKVGKTLKV…ADGHDLWGEV (69 aa)).

This sequence belongs to the methylthiotransferase family. RimO subfamily. It depends on [4Fe-4S] cluster as a cofactor.

The protein localises to the cytoplasm. It carries out the reaction L-aspartate(89)-[ribosomal protein uS12]-hydrogen + (sulfur carrier)-SH + AH2 + 2 S-adenosyl-L-methionine = 3-methylsulfanyl-L-aspartate(89)-[ribosomal protein uS12]-hydrogen + (sulfur carrier)-H + 5'-deoxyadenosine + L-methionine + A + S-adenosyl-L-homocysteine + 2 H(+). Catalyzes the methylthiolation of an aspartic acid residue of ribosomal protein uS12. The chain is Ribosomal protein uS12 methylthiotransferase RimO from Paraburkholderia phytofirmans (strain DSM 17436 / LMG 22146 / PsJN) (Burkholderia phytofirmans).